We begin with the raw amino-acid sequence, 129 residues long: Cytochrome c oxidase subunit 5B, mitochondrial (129 aa).

A mitochondrion-targeting transit peptide spans 1-31 (MASRLLRGVGALAAQALRAHGPRGVAATRSM). Residues Lys68 and Lys86 each carry the N6-acetyllysine modification. Zn(2+) contacts are provided by Cys91, Cys93, Cys113, and Cys116. N6-acetyllysine is present on Lys121.

It belongs to the cytochrome c oxidase subunit 5B family. In terms of assembly, component of the cytochrome c oxidase (complex IV, CIV), a multisubunit enzyme composed of 14 subunits. The complex is composed of a catalytic core of 3 subunits MT-CO1, MT-CO2 and MT-CO3, encoded in the mitochondrial DNA, and 11 supernumerary subunits COX4I, COX5A, COX5B, COX6A, COX6B, COX6C, COX7A, COX7B, COX7C, COX8 and NDUFA4, which are encoded in the nuclear genome. The complex exists as a monomer or a dimer and forms supercomplexes (SCs) in the inner mitochondrial membrane with NADH-ubiquinone oxidoreductase (complex I, CI) and ubiquinol-cytochrome c oxidoreductase (cytochrome b-c1 complex, complex III, CIII), resulting in different assemblies (supercomplex SCI(1)III(2)IV(1) and megacomplex MCI(2)III(2)IV(2)).

The protein localises to the mitochondrion inner membrane. The protein operates within energy metabolism; oxidative phosphorylation. Component of the cytochrome c oxidase, the last enzyme in the mitochondrial electron transport chain which drives oxidative phosphorylation. The respiratory chain contains 3 multisubunit complexes succinate dehydrogenase (complex II, CII), ubiquinol-cytochrome c oxidoreductase (cytochrome b-c1 complex, complex III, CIII) and cytochrome c oxidase (complex IV, CIV), that cooperate to transfer electrons derived from NADH and succinate to molecular oxygen, creating an electrochemical gradient over the inner membrane that drives transmembrane transport and the ATP synthase. Cytochrome c oxidase is the component of the respiratory chain that catalyzes the reduction of oxygen to water. Electrons originating from reduced cytochrome c in the intermembrane space (IMS) are transferred via the dinuclear copper A center (CU(A)) of subunit 2 and heme A of subunit 1 to the active site in subunit 1, a binuclear center (BNC) formed by heme A3 and copper B (CU(B)). The BNC reduces molecular oxygen to 2 water molecules using 4 electrons from cytochrome c in the IMS and 4 protons from the mitochondrial matrix. This Rattus norvegicus (Rat) protein is Cytochrome c oxidase subunit 5B, mitochondrial (Cox5b).